The primary structure comprises 463 residues: Na(+)/H(+) antiporter NhaA 3 (463 aa).

11 helical membrane passes run 28 to 48 (FLAT…AALL), 79 to 99 (LHHW…GLEI), 114 to 134 (IAVP…IYFV), 144 to 164 (GWGI…ALFG), 173 to 193 (LFLL…VGIF), 196 to 216 (DHLN…ILGL), 232 to 252 (LVLW…GVLV), 305 to 325 (VLHP…NAGV), 344 to 364 (VAAA…VAAI), 377 to 397 (YGHL…SLFI), and 413 to 433 (IGIL…LRVL). Residues 444–463 (TDEPVPRLPPRPWRAPVPAK) are disordered. Residues 449–463 (PRLPPRPWRAPVPAK) show a composition bias toward pro residues.

The protein belongs to the NhaA Na(+)/H(+) (TC 2.A.33) antiporter family.

It localises to the cell membrane. It carries out the reaction Na(+)(in) + 2 H(+)(out) = Na(+)(out) + 2 H(+)(in). Functionally, na(+)/H(+) antiporter that extrudes sodium in exchange for external protons. The chain is Na(+)/H(+) antiporter NhaA 3 from Frankia alni (strain DSM 45986 / CECT 9034 / ACN14a).